The primary structure comprises 195 residues: MLNAPTQALLGRPLVGNGANGAPGTGANGGDGGILFGSGGAGGSGAAGMAGGNGGAAGLFGNGGAGGAGGSATAGAAGAGGNGGAGGLLFGTAGAGGNGGLSLGLGVAGGAGGAGGSGGSDTAGHGGTGGAGGLLFGAGEDGTTPGGNGGAGGVAGLFGDGGNGGNAGVGTPAGNVGAGGTGGLLLGQDGMTGLT.

The protein belongs to the mycobacterial PE family. PGRS subfamily. As to quaternary structure, interacts with human TLR2.

It is found in the secreted. It localises to the cell wall. Its subcellular location is the cell surface. Binding of Ca(2+) to PE_PGRS61 induces conformational changes and increases affinity for TLR2. Mediates Ca(2+)-dependent up-regulation of the anti-inflammatory cytokine IL-10. This is PE-PGRS family protein PE_PGRS61 from Mycobacterium tuberculosis (strain ATCC 25618 / H37Rv).